We begin with the raw amino-acid sequence, 254 residues long: Ribonuclease HII (254 aa).

The RNase H type-2 domain occupies 70–254 (RYICGIDEVG…ASFIKNLTSC (185 aa)). Residues aspartate 76, glutamate 77, and aspartate 168 each contribute to the a divalent metal cation site.

It belongs to the RNase HII family. It depends on Mn(2+) as a cofactor. The cofactor is Mg(2+).

Its subcellular location is the cytoplasm. The enzyme catalyses Endonucleolytic cleavage to 5'-phosphomonoester.. In terms of biological role, endonuclease that specifically degrades the RNA of RNA-DNA hybrids. The sequence is that of Ribonuclease HII from Lachnoclostridium phytofermentans (strain ATCC 700394 / DSM 18823 / ISDg) (Clostridium phytofermentans).